Reading from the N-terminus, the 209-residue chain is MSQVDINHARALVYQLLSSLFAREVDEQRLKELTSEAAQQFWEQLSLEANFTQSVDKIRSTLNGIKDDEALLELAADYCGLFLVGTKHSASPYASLYLSGEDEPLLFGEQHQQMSEFLHQSKLQVQSHFPEPADHLAVMLAYMAHLFCHSENSVQLSFLQTCFNSWLAKFINHLTQCNKNGFYSAVATLTLAWVKQDIAQLEPAVAIIS.

This sequence belongs to the TorD/DmsD family. TorD subfamily.

It is found in the cytoplasm. Involved in the biogenesis of TorA. Acts on TorA before the insertion of the molybdenum cofactor and, as a result, probably favors a conformation of the apoenzyme that is competent for acquiring the cofactor. This chain is Chaperone protein TorD, found in Shewanella massilia.